The primary structure comprises 138 residues: Flagellar basal body rod protein FlgB (138 aa).

Belongs to the flagella basal body rod proteins family. As to quaternary structure, the basal body constitutes a major portion of the flagellar organelle and consists of a number of rings mounted on a central rod. In Gram-negative bacteria, at least four rings, L, P, S and M are present, whereas Gram-positive bacteria lack the L and P rings. The rod consists of about 26 subunits of FlgG in the distal portion, and FlgB, FlgC and FlgF build up the proximal portion of the rod with about 6 subunits each. Rod assembly occurs by export via the flagellum-specific pathway of its constituent proteins and by their incorporation into the rod structure in the probable order of FlgB, FlgC, FlgF and FlgG. Another protein, FliE, also assembles onto the stable rod structure.

It is found in the bacterial flagellum basal body. Its function is as follows. Structural component of flagellum, the bacterial motility apparatus. Part of the rod structure of flagellar basal body. The protein is Flagellar basal body rod protein FlgB (flgB) of Escherichia coli (strain K12).